Here is a 159-residue protein sequence, read N- to C-terminus: Phosphopantetheine adenylyltransferase (159 aa).

Ser-9 is a binding site for substrate. Residues 9 to 10 (SF) and His-17 contribute to the ATP site. Residues Lys-41, Leu-73, and Lys-87 each contribute to the substrate site. ATP is bound by residues 88–90 (GLR), Glu-98, and 123–129 (NIHISSS).

This sequence belongs to the bacterial CoaD family. Homohexamer. The cofactor is Mg(2+).

It is found in the cytoplasm. The enzyme catalyses (R)-4'-phosphopantetheine + ATP + H(+) = 3'-dephospho-CoA + diphosphate. Its pathway is cofactor biosynthesis; coenzyme A biosynthesis; CoA from (R)-pantothenate: step 4/5. Its function is as follows. Reversibly transfers an adenylyl group from ATP to 4'-phosphopantetheine, yielding dephospho-CoA (dPCoA) and pyrophosphate. The polypeptide is Phosphopantetheine adenylyltransferase (Clostridium beijerinckii (strain ATCC 51743 / NCIMB 8052) (Clostridium acetobutylicum)).